We begin with the raw amino-acid sequence, 738 residues long: Phosphoribosylformylglycinamidine synthase subunit PurL (738 aa).

His-41 is an active-site residue. ATP is bound by residues Tyr-44 and Lys-83. Residue Glu-85 coordinates Mg(2+). Residues 86–89 (SHNH) and Arg-108 contribute to the substrate site. The active-site Proton acceptor is His-87. Residue Asp-109 participates in Mg(2+) binding. Position 233 (Gln-233) interacts with substrate. Mg(2+) is bound at residue Asp-261. 305-307 (ESQ) is a binding site for substrate. Asp-490 and Gly-527 together coordinate ATP. Residue Asn-528 coordinates Mg(2+). Ser-530 is a binding site for substrate.

It belongs to the FGAMS family. As to quaternary structure, monomer. Part of the FGAM synthase complex composed of 1 PurL, 1 PurQ and 2 PurS subunits.

It localises to the cytoplasm. The catalysed reaction is N(2)-formyl-N(1)-(5-phospho-beta-D-ribosyl)glycinamide + L-glutamine + ATP + H2O = 2-formamido-N(1)-(5-O-phospho-beta-D-ribosyl)acetamidine + L-glutamate + ADP + phosphate + H(+). It participates in purine metabolism; IMP biosynthesis via de novo pathway; 5-amino-1-(5-phospho-D-ribosyl)imidazole from N(2)-formyl-N(1)-(5-phospho-D-ribosyl)glycinamide: step 1/2. Its function is as follows. Part of the phosphoribosylformylglycinamidine synthase complex involved in the purines biosynthetic pathway. Catalyzes the ATP-dependent conversion of formylglycinamide ribonucleotide (FGAR) and glutamine to yield formylglycinamidine ribonucleotide (FGAM) and glutamate. The FGAM synthase complex is composed of three subunits. PurQ produces an ammonia molecule by converting glutamine to glutamate. PurL transfers the ammonia molecule to FGAR to form FGAM in an ATP-dependent manner. PurS interacts with PurQ and PurL and is thought to assist in the transfer of the ammonia molecule from PurQ to PurL. This chain is Phosphoribosylformylglycinamidine synthase subunit PurL, found in Alkaliphilus metalliredigens (strain QYMF).